Here is a 501-residue protein sequence, read N- to C-terminus: Geissoschizine oxidase (501 aa).

Residues 1–21 (MEFSFSSPLLYILYFLLFFIV) traverse the membrane as a helical segment. A heme-binding site is contributed by cysteine 442.

This sequence belongs to the cytochrome P450 family. It depends on heme as a cofactor.

Its subcellular location is the membrane. It carries out the reaction (19E)-geissoschizine + reduced [NADPH--hemoprotein reductase] + O2 = akuammicine + formate + oxidized [NADPH--hemoprotein reductase] + H2O + H(+). It functions in the pathway alkaloid biosynthesis. A cytochrome P450 monooxygenase involved in the biosynthesis of strychnos monoterpene indole alkaloids (MIAs) natural products, compounds with effects on glucose absorption. Catalyzes the conversion of geissoschizine to akuammicine. The polypeptide is Geissoschizine oxidase (Alstonia scholaris (Dogbane)).